The primary structure comprises 200 residues: Peroxiredoxin (200 aa).

One can recognise a Thioredoxin domain in the interval alanine 6–phenylalanine 166. The active-site Cysteine sulfenic acid (-SOH) intermediate is cysteine 52.

Belongs to the peroxiredoxin family. AhpC/Prx1 subfamily. In terms of assembly, homodimer; disulfide-linked, upon oxidation.

The enzyme catalyses a hydroperoxide + [thioredoxin]-dithiol = an alcohol + [thioredoxin]-disulfide + H2O. Its function is as follows. Thiol-specific peroxidase that catalyzes the reduction of hydrogen peroxide and organic hydroperoxides to water and alcohols, respectively. Plays a role in cell protection against oxidative stress by detoxifying peroxides and as sensor of hydrogen peroxide-mediated signaling events. This is Peroxiredoxin from Oncorhynchus mykiss (Rainbow trout).